Reading from the N-terminus, the 540-residue chain is DNA topoisomerase 1 (540 aa).

In terms of domain architecture, Toprim spans 1–110 (MELFIVESPT…NIKRAVFYEI (110 aa)). The Mg(2+) site is built by E7 and D79. The region spanning 126–536 (NMNLVYAQFA…FMEKIFGKEL (411 aa)) is the Topo IA-type catalytic domain. The interaction with DNA stretch occupies residues 161 to 166 (SAGRVQ). Catalysis depends on Y281, which acts as the O-(5'-phospho-DNA)-tyrosine intermediate.

The protein belongs to the type IA topoisomerase family. Monomer. Mg(2+) serves as cofactor.

The enzyme catalyses ATP-independent breakage of single-stranded DNA, followed by passage and rejoining.. Releases the supercoiling and torsional tension of DNA, which is introduced during the DNA replication and transcription, by transiently cleaving and rejoining one strand of the DNA duplex. Introduces a single-strand break via transesterification at a target site in duplex DNA. The scissile phosphodiester is attacked by the catalytic tyrosine of the enzyme, resulting in the formation of a DNA-(5'-phosphotyrosyl)-enzyme intermediate and the expulsion of a 3'-OH DNA strand. The free DNA strand then undergoes passage around the unbroken strand, thus removing DNA supercoils. Finally, in the religation step, the DNA 3'-OH attacks the covalent intermediate to expel the active-site tyrosine and restore the DNA phosphodiester backbone. The chain is DNA topoisomerase 1 from Aquifex aeolicus (strain VF5).